A 275-amino-acid chain; its full sequence is Pantothenate synthetase (275 aa).

Met26 to His33 lines the ATP pocket. The Proton donor role is filled by His33. Gln57 is a binding site for (R)-pantoate. Gln57 contributes to the beta-alanine binding site. Gly144–Asp147 lines the ATP pocket. Gln150 is a (R)-pantoate binding site. Residues Val173 and Leu181–Arg184 each bind ATP.

It belongs to the pantothenate synthetase family. Homodimer.

The protein localises to the cytoplasm. The catalysed reaction is (R)-pantoate + beta-alanine + ATP = (R)-pantothenate + AMP + diphosphate + H(+). The protein operates within cofactor biosynthesis; (R)-pantothenate biosynthesis; (R)-pantothenate from (R)-pantoate and beta-alanine: step 1/1. In terms of biological role, catalyzes the condensation of pantoate with beta-alanine in an ATP-dependent reaction via a pantoyl-adenylate intermediate. The protein is Pantothenate synthetase of Azoarcus sp. (strain BH72).